The chain runs to 419 residues: Serine hydroxymethyltransferase (419 aa).

(6S)-5,6,7,8-tetrahydrofolate is bound by residues leucine 121 and 125–127 (GHL). The residue at position 230 (lysine 230) is an N6-(pyridoxal phosphate)lysine. 354–356 (SPF) is a binding site for (6S)-5,6,7,8-tetrahydrofolate.

Belongs to the SHMT family. Homodimer. Requires pyridoxal 5'-phosphate as cofactor.

The protein localises to the cytoplasm. The enzyme catalyses (6R)-5,10-methylene-5,6,7,8-tetrahydrofolate + glycine + H2O = (6S)-5,6,7,8-tetrahydrofolate + L-serine. It participates in one-carbon metabolism; tetrahydrofolate interconversion. It functions in the pathway amino-acid biosynthesis; glycine biosynthesis; glycine from L-serine: step 1/1. Catalyzes the reversible interconversion of serine and glycine with tetrahydrofolate (THF) serving as the one-carbon carrier. This reaction serves as the major source of one-carbon groups required for the biosynthesis of purines, thymidylate, methionine, and other important biomolecules. Also exhibits THF-independent aldolase activity toward beta-hydroxyamino acids, producing glycine and aldehydes, via a retro-aldol mechanism. The sequence is that of Serine hydroxymethyltransferase from Prochlorococcus marinus (strain SARG / CCMP1375 / SS120).